We begin with the raw amino-acid sequence, 377 residues long: Chaperone protein DnaJ (377 aa).

In terms of domain architecture, J spans 5–70; the sequence is DYYEILGVSK…QKRAAYDQYG (66 aa). The segment at 132 to 210 adopts a CR-type zinc-finger fold; it reads GVTKEIRIPT…CHGHGRVEKT (79 aa). Zn(2+)-binding residues include Cys-145, Cys-148, Cys-162, Cys-165, Cys-184, Cys-187, Cys-198, and Cys-201. CXXCXGXG motif repeat units follow at residues 145 to 152, 162 to 169, 184 to 191, and 198 to 205; these read CDVCHGSG, CPTCHGAG, CPHCQGRG, and CNKCHGHG.

Belongs to the DnaJ family. Homodimer. Zn(2+) serves as cofactor.

The protein resides in the cytoplasm. Participates actively in the response to hyperosmotic and heat shock by preventing the aggregation of stress-denatured proteins and by disaggregating proteins, also in an autonomous, DnaK-independent fashion. Unfolded proteins bind initially to DnaJ; upon interaction with the DnaJ-bound protein, DnaK hydrolyzes its bound ATP, resulting in the formation of a stable complex. GrpE releases ADP from DnaK; ATP binding to DnaK triggers the release of the substrate protein, thus completing the reaction cycle. Several rounds of ATP-dependent interactions between DnaJ, DnaK and GrpE are required for fully efficient folding. Also involved, together with DnaK and GrpE, in the DNA replication of plasmids through activation of initiation proteins. This is Chaperone protein DnaJ from Klebsiella pneumoniae subsp. pneumoniae (strain ATCC 700721 / MGH 78578).